The chain runs to 68 residues: Guanine nucleotide-binding protein G(I)/G(S)/G(O) subunit gamma-10 (68 aa).

An N-acetylserine modification is found at S2. C65 carries the cysteine methyl ester modification. C65 carries the S-geranylgeranyl cysteine lipid modification. The propeptide at 66–68 (ALL) is removed in mature form.

The protein belongs to the G protein gamma family. In terms of assembly, g proteins are composed of 3 units, alpha, beta and gamma. Abundantly and ubiquitously expressed.

The protein resides in the cell membrane. Functionally, guanine nucleotide-binding proteins (G proteins) are involved as a modulator or transducer in various transmembrane signaling systems. The beta and gamma chains are required for the GTPase activity, for replacement of GDP by GTP, and for G protein-effector interaction. Interacts with beta-1 and beta-2, but not with beta-3. In Homo sapiens (Human), this protein is Guanine nucleotide-binding protein G(I)/G(S)/G(O) subunit gamma-10 (GNG10).